A 288-amino-acid chain; its full sequence is MKKIAIFGSRHKSEQGASIKALILKLEEAGTPLYIERKFLSFLEQDLDFHPAICGVIDTLPEHIDYVICMGGDGTFLRTAHQIGVSQIPVLGVNTGRLGFLTDVDCHEASELITRLLDGDFTIETRSLLEVTEDNGSSPSYALNEAAILKRETGSMIRVNACLNDDYLAAYDADGLVVATPSGSTAYSLSGNGPIIMPACRNFVLTPIAPHSLNMRPLVVPDDTAIRLEVDSRSRNYLLVLDGRTRTLPCDTSILLKRAPHTLRMIRLRPHSFAETLRRKLMWGAAVR.

Catalysis depends on Asp73, which acts as the Proton acceptor. NAD(+) contacts are provided by residues 73 to 74 (DG), Arg78, 144 to 145 (NE), Asp174, 185 to 190 (TAYSLS), and Ala209.

It belongs to the NAD kinase family. A divalent metal cation serves as cofactor.

The protein localises to the cytoplasm. It carries out the reaction NAD(+) + ATP = ADP + NADP(+) + H(+). Functionally, involved in the regulation of the intracellular balance of NAD and NADP, and is a key enzyme in the biosynthesis of NADP. Catalyzes specifically the phosphorylation on 2'-hydroxyl of the adenosine moiety of NAD to yield NADP. This is NAD kinase from Porphyromonas gingivalis (strain ATCC 33277 / DSM 20709 / CIP 103683 / JCM 12257 / NCTC 11834 / 2561).